The chain runs to 68 residues: Large ribosomal subunit protein uL29 (68 aa).

Belongs to the universal ribosomal protein uL29 family.

In Finegoldia magna (strain ATCC 29328 / DSM 20472 / WAL 2508) (Peptostreptococcus magnus), this protein is Large ribosomal subunit protein uL29.